A 303-amino-acid chain; its full sequence is ATP synthase gamma chain (303 aa).

The protein belongs to the ATPase gamma chain family. As to quaternary structure, F-type ATPases have 2 components, CF(1) - the catalytic core - and CF(0) - the membrane proton channel. CF(1) has five subunits: alpha(3), beta(3), gamma(1), delta(1), epsilon(1). CF(0) has three main subunits: a, b and c.

The protein resides in the cell inner membrane. In terms of biological role, produces ATP from ADP in the presence of a proton gradient across the membrane. The gamma chain is believed to be important in regulating ATPase activity and the flow of protons through the CF(0) complex. In Elusimicrobium minutum (strain Pei191), this protein is ATP synthase gamma chain.